A 1203-amino-acid chain; its full sequence is Regulator of telomere elongation helicase 1 (1203 aa).

The Helicase ATP-binding domain occupies 7–296; sequence NGVTVDFPFQ…ARVTQQGELQ (290 aa). 42 to 49 contacts ATP; the sequence is SPTGTGKT. Residues C145, C163, C172, and C207 each coordinate [4Fe-4S] cluster. Positions 151–167 match the Nuclear localization signal motif; sequence KKQESNHMQISLCRKKV. The DEAH box signature appears at 250–253; that stretch reads DEAH. The Nuclear localization signal motif lies at 871 to 877; sequence QKGGRKK. Disordered stretches follow at residues 998–1020 and 1120–1203; these read QLDP…TSKG and TTGK…RSKQ. Over residues 1123–1134 the composition is skewed to basic and acidic residues; it reads KDLELEGPRDES. The short motif at 1160–1167 is the PIP-box element; sequence QSKISSFF. Basic and acidic residues predominate over residues 1169-1181; that stretch reads QRPDESVRSDDTT.

Belongs to the helicase family. RAD3/XPD subfamily. As to quaternary structure, interacts with TERF1. Interacts (via PIP-box) with PCNA; the interaction is direct and essential for suppressing telomere fragility. Interacts with MMS19; the interaction mediates the association of RTEL1 with the cytosolic iron-sulfur protein assembly (CIA) complex.

It localises to the nucleus. The enzyme catalyses ATP + H2O = ADP + phosphate + H(+). In terms of biological role, a probable ATP-dependent DNA helicase implicated in telomere-length regulation, DNA repair and the maintenance of genomic stability. Acts as an anti-recombinase to counteract toxic recombination and limit crossover during meiosis. Regulates meiotic recombination and crossover homeostasis by physically dissociating strand invasion events and thereby promotes noncrossover repair by meiotic synthesis dependent strand annealing (SDSA) as well as disassembly of D loop recombination intermediates. Also disassembles T loops and prevents telomere fragility by counteracting telomeric G4-DNA structures, which together ensure the dynamics and stability of the telomere. The chain is Regulator of telomere elongation helicase 1 (Rtel1) from Mus spretus (Western Mediterranean mouse).